Reading from the N-terminus, the 117-residue chain is uncharacterized protein (117 aa).

This is an uncharacterized protein from Bacillus subtilis (strain 168).